Here is a 62-residue protein sequence, read N- to C-terminus: Statherin (62 aa).

A signal peptide spans M1–A19. Residues D20–K25 form a hydroxyapatite-binding; inhibits crystal growth region. Phosphoserine is present on residues S21 and S22. Residues K25 to Q56 constitute a cross-link (isoglutamyl lysine isopeptide (Lys-Gln); in form cyclo-statherin Q-37). The isoglutamyl lysine isopeptide (Lys-Gln); in form cyclo-statherin Q-39 cross-link spans K25–Q58. A hydrophobic; inhibits precipitation of calcium phosphate salts region spans residues G38 to F62.

It belongs to the histatin/statherin family. In terms of processing, substrate for transglutaminase-2. More than 95% of the cyclized peptide is cyclo-statherin Q-37, and less than 5% is cyclo-statherin Q-39. Cyclized forms account for about 1% of total statherin in saliva. Sulfated on tyrosine residues. Secreted by parotid and submandibular glands.

The protein localises to the secreted. Its function is as follows. Salivary protein that stabilizes saliva supersaturated with calcium salts by inhibiting the precipitation of calcium phosphate salts. It also modulates hydroxyapatite crystal formation on the tooth surface. This chain is Statherin (STATH), found in Homo sapiens (Human).